We begin with the raw amino-acid sequence, 217 residues long: Uridylate kinase (217 aa).

Lys5–Arg9 contributes to the ATP binding site. Gly37 contacts UMP. Positions 38 and 42 each coordinate ATP. UMP-binding positions include Asp59 and Phe107–Thr113. ATP contacts are provided by Asn134, Tyr139, and Asp142.

This sequence belongs to the UMP kinase family. As to quaternary structure, homohexamer.

It is found in the cytoplasm. It catalyses the reaction UMP + ATP = UDP + ADP. The protein operates within pyrimidine metabolism; CTP biosynthesis via de novo pathway; UDP from UMP (UMPK route): step 1/1. Its activity is regulated as follows. Inhibited by UTP. Catalyzes the reversible phosphorylation of UMP to UDP. The polypeptide is Uridylate kinase (Pyrobaculum calidifontis (strain DSM 21063 / JCM 11548 / VA1)).